Consider the following 432-residue polypeptide: Adenylosuccinate synthetase (432 aa).

GTP contacts are provided by residues 13–19 (GDEGKGK) and 41–43 (GHT). D14 serves as the catalytic Proton acceptor. The Mg(2+) site is built by D14 and G41. Residues 14-17 (DEGK), 39-42 (NAGH), T130, R144, Q225, T240, and R304 each bind IMP. The active-site Proton donor is H42. Substrate is bound at residue 300–306 (STTGRRR). Residues R306, 332 to 334 (KID), and 415 to 417 (STG) each bind GTP.

The protein belongs to the adenylosuccinate synthetase family. As to quaternary structure, homodimer. It depends on Mg(2+) as a cofactor.

It is found in the cytoplasm. It catalyses the reaction IMP + L-aspartate + GTP = N(6)-(1,2-dicarboxyethyl)-AMP + GDP + phosphate + 2 H(+). Its pathway is purine metabolism; AMP biosynthesis via de novo pathway; AMP from IMP: step 1/2. Its function is as follows. Plays an important role in the de novo pathway of purine nucleotide biosynthesis. Catalyzes the first committed step in the biosynthesis of AMP from IMP. The chain is Adenylosuccinate synthetase from Blochmanniella pennsylvanica (strain BPEN).